A 309-amino-acid polypeptide reads, in one-letter code: Tagatose-6-phosphate kinase (309 aa).

This sequence belongs to the carbohydrate kinase PfkB family. LacC subfamily.

It carries out the reaction D-tagatofuranose 6-phosphate + ATP = D-tagatofuranose 1,6-bisphosphate + ADP + H(+). The protein operates within carbohydrate metabolism; D-tagatose 6-phosphate degradation; D-glyceraldehyde 3-phosphate and glycerone phosphate from D-tagatose 6-phosphate: step 1/2. The chain is Tagatose-6-phosphate kinase from Streptococcus pyogenes serotype M18 (strain MGAS8232).